The chain runs to 551 residues: Glucans biosynthesis protein D (551 aa).

A signal peptide (tat-type signal) is located at residues 1–32; it reads MNRRRFIKGSMAMAAVCGSSGIASLFSQAAFA.

This sequence belongs to the OpgD/OpgG family. Post-translationally, predicted to be exported by the Tat system. The position of the signal peptide cleavage has not been experimentally proven.

Its subcellular location is the periplasm. It participates in glycan metabolism; osmoregulated periplasmic glucan (OPG) biosynthesis. In terms of biological role, probably involved in the control of the structural glucose backbone of osmoregulated periplasmic glucans (OPGs). This is Glucans biosynthesis protein D (mdoD) from Salmonella typhimurium (strain LT2 / SGSC1412 / ATCC 700720).